The sequence spans 469 residues: ATP synthase subunit beta (469 aa).

ATP is bound at residue 156–163 (GGAGVGKT).

This sequence belongs to the ATPase alpha/beta chains family. F-type ATPases have 2 components, CF(1) - the catalytic core - and CF(0) - the membrane proton channel. CF(1) has five subunits: alpha(3), beta(3), gamma(1), delta(1), epsilon(1). CF(0) has three main subunits: a(1), b(2) and c(9-12). The alpha and beta chains form an alternating ring which encloses part of the gamma chain. CF(1) is attached to CF(0) by a central stalk formed by the gamma and epsilon chains, while a peripheral stalk is formed by the delta and b chains.

The protein resides in the cell membrane. The catalysed reaction is ATP + H2O + 4 H(+)(in) = ADP + phosphate + 5 H(+)(out). In terms of biological role, produces ATP from ADP in the presence of a proton gradient across the membrane. The catalytic sites are hosted primarily by the beta subunits. This Bacillus mycoides (strain KBAB4) (Bacillus weihenstephanensis) protein is ATP synthase subunit beta.